Consider the following 424-residue polypeptide: Histidine--tRNA ligase (424 aa).

Belongs to the class-II aminoacyl-tRNA synthetase family. In terms of assembly, homodimer.

Its subcellular location is the cytoplasm. It catalyses the reaction tRNA(His) + L-histidine + ATP = L-histidyl-tRNA(His) + AMP + diphosphate + H(+). This is Histidine--tRNA ligase from Shigella dysenteriae serotype 1 (strain Sd197).